Here is a 680-residue protein sequence, read N- to C-terminus: DNA-directed RNA polymerase subunit beta' (680 aa).

Zn(2+) is bound by residues Cys69, Cys71, Cys87, and Cys90. 3 residues coordinate Mg(2+): Asp489, Asp491, and Asp493.

This sequence belongs to the RNA polymerase beta' chain family. RpoC1 subfamily. In plastids the minimal PEP RNA polymerase catalytic core is composed of four subunits: alpha, beta, beta', and beta''. When a (nuclear-encoded) sigma factor is associated with the core the holoenzyme is formed, which can initiate transcription. Mg(2+) is required as a cofactor. It depends on Zn(2+) as a cofactor.

It localises to the plastid. It is found in the chloroplast. It catalyses the reaction RNA(n) + a ribonucleoside 5'-triphosphate = RNA(n+1) + diphosphate. Functionally, DNA-dependent RNA polymerase catalyzes the transcription of DNA into RNA using the four ribonucleoside triphosphates as substrates. The chain is DNA-directed RNA polymerase subunit beta' from Arabidopsis thaliana (Mouse-ear cress).